The sequence spans 138 residues: Rubber elongation factor protein (138 aa).

Alanine 2 is subject to N-acetylalanine.

Belongs to the REF/SRPP family. As to quaternary structure, in solution, able to form amyloid fibers and aggregates rich in beta-sheets. Interaction with membrane stabilizes the protein, inhibiting the amyloid state and aggregation. In terms of processing, not glycosylated. Localized in all laticifer layers.

It is found in the cytoplasm. Functionally, may be part of the rubber biosynthesis machinery. Plays a role in rubber elongation. This Hevea brasiliensis (Para rubber tree) protein is Rubber elongation factor protein.